We begin with the raw amino-acid sequence, 596 residues long: Cis-3-hydroxy-L-proline dehydratase (596 aa).

The active-site Proton acceptor is the Ser-67.

Belongs to the AcnX family. Monomer. It depends on Fe(3+) as a cofactor.

The catalysed reaction is cis-3-hydroxy-L-proline = 1-pyrroline-2-carboxylate + H2O. With respect to regulation, inhibited by Zn(2+). Not inhibited by pyrrole-2-carboxylate nor its derivative 2-thiophenecarboxylate. Functionally, catalyzes the dehydration of cis-3-hydroxy-L-proline (c3LHyp) to Delta(1)-pyrroline-2-carboxylate (Pyr2C). No activity with L-proline, trans-4-hydroxy-L-proline (t4LHyp), cis-4-hydroxy-L-proline (c4LHyp), trans-3-hydroxy-L-proline (t3LHyp), D-proline, cis-4-hydroxy-D-proline (c4DHyp), trans-4-hydroxy-D-proline (t4DHyp) or L-serine as substrates. Because of the low catalytic efficiency, C3LHyp is likely not a main physiological substrate of this enzyme in H.jecorina. This is Cis-3-hydroxy-L-proline dehydratase from Hypocrea jecorina (strain QM6a) (Trichoderma reesei).